A 304-amino-acid chain; its full sequence is Oxygen-dependent coproporphyrinogen-III oxidase (304 aa).

Residue S94 participates in substrate binding. The a divalent metal cation site is built by H98 and H108. The active-site Proton donor is the H108. Substrate is bound at residue 110-112; that stretch reads NVR. The a divalent metal cation site is built by H147 and H177. The segment at 242 to 277 is important for dimerization; sequence YVEFNLVYDRGTLFGLQSGGRTESILMSLPPVAHWR. 260–262 is a substrate binding site; the sequence is GGR.

The protein belongs to the aerobic coproporphyrinogen-III oxidase family. In terms of assembly, homodimer. The cofactor is a divalent metal cation.

Its subcellular location is the cytoplasm. The enzyme catalyses coproporphyrinogen III + O2 + 2 H(+) = protoporphyrinogen IX + 2 CO2 + 2 H2O. It functions in the pathway porphyrin-containing compound metabolism; protoporphyrin-IX biosynthesis; protoporphyrinogen-IX from coproporphyrinogen-III (O2 route): step 1/1. Functionally, involved in the heme biosynthesis. Catalyzes the aerobic oxidative decarboxylation of propionate groups of rings A and B of coproporphyrinogen-III to yield the vinyl groups in protoporphyrinogen-IX. The sequence is that of Oxygen-dependent coproporphyrinogen-III oxidase from Methylococcus capsulatus (strain ATCC 33009 / NCIMB 11132 / Bath).